A 407-amino-acid polypeptide reads, in one-letter code: Transmembrane protein 184B (407 aa).

Positions 1-28 are enriched in low complexity; that stretch reads MTVRGAALAPDPASPTTTTASPSVSATP. The interval 1–31 is disordered; sequence MTVRGAALAPDPASPTTTTASPSVSATPEGS. 7 helical membrane passes run 40-60, 84-104, 121-141, 178-198, 214-234, 249-269, and 290-310; these read FLMT…ALLI, ILFI…FFTN, FVIY…SAIM, LQFC…QAFG, VTII…LFYF, FFMV…LAIL, and VAAG…ALAL. The tract at residues 369 to 395 is disordered; it reads TLEPGPTWRGGTHSLSRSHSLSGARDN. A phosphoserine mark is found at Ser-388, Ser-402, and Ser-403.

Belongs to the TMEM184 family.

It is found in the membrane. In terms of biological role, may activate the MAP kinase signaling pathway. The chain is Transmembrane protein 184B (Tmem184b) from Mus musculus (Mouse).